The primary structure comprises 2198 residues: RNA-directed RNA polymerase L (2198 aa).

Residues 26-284 form an endonuclease region; that stretch reads KEALLSQVEV…AHSDSLAPEC (259 aa). The Mn(2+) site is built by Glu-51, Asp-89, and Glu-102. The active site involves Lys-115. Residues 1161-1359 enclose the RdRp catalytic domain; it reads CDMKMAVNNG…FLSSKFNKFV (199 aa). Position 1319 (Asp-1319) interacts with Mg(2+).

The protein belongs to the Bunyavirales RNA polymerase family. In terms of assembly, homomultimer; the oligomeric structure is essential for the polymerase activity. Interacts with nucleoprotein N. Interacts with protein Z; this interaction inhibits viral transcription and replication, Z partially blocks the product exit tunnel for the releasing nascent RNA product. The cofactor is Mn(2+). Mg(2+) serves as cofactor.

Its subcellular location is the virion. It is found in the host cytoplasm. The catalysed reaction is RNA(n) + a ribonucleoside 5'-triphosphate = RNA(n+1) + diphosphate. In terms of biological role, RNA-dependent RNA polymerase, which is responsible for the replication and transcription of the viral RNA genome using antigenomic RNA as an intermediate. During transcription, synthesizes subgenomic RNAs and assures their capping by a cap-snatching mechanism, which involves the endonuclease activity cleaving the host capped pre-mRNAs. These short capped RNAs are then used as primers for viral transcription. The 3'-end of subgenomic mRNAs molecules are heterogeneous and not polyadenylated. The replicase function is to direct synthesis of antigenomic and genomic RNA which are encapsidated and non capped. As a consequence of the use of the same enzyme for both transcription and replication, these mechanisms need to be well coordinated. These processes may be regulated by proteins N and Z in a dose-dependent manner. Z protein inhibits the viral polymerase L und thus the viral transcription and RNA synthesis. In Homo sapiens (Human), this protein is RNA-directed RNA polymerase L.